The following is a 781-amino-acid chain: Transcription factor Sp3 (781 aa).

A compositionally biased stretch (basic and acidic residues) spans 1–12 (MTAPEKPVKQEE). 2 disordered regions span residues 1-53 (MTAP…AAQD) and 65-88 (TCSK…AGAP). Gly residues predominate over residues 20-31 (SGGGGGGGGGHG). Low complexity predominate over residues 32–53 (EYLQQQQQHGNGAVAAAAAAQD). Position 73 is a phosphoserine (Ser-73). Lys-120 is covalently cross-linked (Glycyl lysine isopeptide (Lys-Gly) (interchain with G-Cter in SUMO)). Positions 138-237 (QYVLPLQNLQ…IPQTGQVQVQ (100 aa)) are transactivation domain (Gln-rich). Residues 301 to 338 (QAMDSSDNSERTGERVSPDINETNTDTDLFVPTSSSSQ) form a disordered region. Residues 308-317 (NSERTGERVS) show a composition bias toward basic and acidic residues. The segment covering 320-338 (INETNTDTDLFVPTSSSSQ) has biased composition (polar residues). The transactivation domain (Gln-rich) stretch occupies residues 350–499 (QQNTNSLTTS…TPVQTLTLGQ (150 aa)). The 9aaTAD motif lies at 461–469 (VTWQTFQVQ). The segment at 534–620 (IQLHPGENAD…RGTNLGKKKQ (87 aa)) is repressor domain. Lys-551 bears the N6-acetyllysine; alternate mark. Lys-551 is covalently cross-linked (Glycyl lysine isopeptide (Lys-Gly) (interchain with G-Cter in SUMO); alternate). Lys-551 is covalently cross-linked (Glycyl lysine isopeptide (Lys-Gly) (interchain with G-Cter in SUMO1); alternate). Lys-551 participates in a covalent cross-link: Glycyl lysine isopeptide (Lys-Gly) (interchain with G-Cter in SUMO2); alternate. A phosphoserine mark is found at Ser-563 and Ser-566. Residue Lys-593 forms a Glycyl lysine isopeptide (Lys-Gly) (interchain with G-Cter in SUMO2) linkage. The C2H2-type 1 zinc finger occupies 621–645 (HICHIPGCGKVYGKTSHLRAHLRWH). Ser-646 is modified (phosphoserine). C2H2-type zinc fingers lie at residues 651 to 675 (FVCN…RRTH) and 681 to 703 (FVCP…IKTH).

The protein belongs to the Sp1 C2H2-type zinc-finger protein family. Interacts with HLTF; the interaction may be required for basal transcriptional activity of HLTF. Interacts with HDAC1; the interaction deacetylates SP3 and regulates its transcriptional activity. Interacts with HDAC2 (preferably the CK2-phosphorylated form); the interaction deacetylates SP3 and regulates its transcriptional activity. Interacts with MEIS2 isoform 4 and PBX1 isoform PBX1a. In terms of processing, not glycosylated. Post-translationally, acetylated by histone acetyltransferase p300, deacetylated by HDACs. Acetylation/deacetylation states regulate transcriptional activity. Acetylation appears to activate transcription. Alternate sumoylation and acetylation at Lys-551 also control transcriptional activity. Ceramides can also regulate acetylation/deacetylation events through altering the interaction of HDAC with SP3. In vitro, C(18)-ceramides, but not C(16)-ceramides, increase the interaction of HDAC1 with SP3 and enhance the deacetylation of SP3 and the subsequent repression of the TERT promoter. Sumoylated on all isoforms. Sumoylated on 2 sites in longer isoforms with Lys-551 being the major site. Sumoylation at this site promotes nuclear localization to the nuclear periphery, nuclear dots and PML nuclear bodies. Sumoylation on Lys-551 represses the transactivation activity, except for the largest isoform, L-Sp3, which has little effect on transactivation. Alternate sumoylation and acetylation at Lys-551 also control transcriptional activity. Ubiquitously expressed.

Its subcellular location is the nucleus. It is found in the PML body. Its function is as follows. Transcriptional factor that can act as an activator or repressor depending on isoform and/or post-translational modifications. Binds to GT and GC boxes promoter elements. Competes with SP1 for the GC-box promoters. Weak activator of transcription but can activate a number of genes involved in different processes such as cell-cycle regulation, hormone-induction and house-keeping. The protein is Transcription factor Sp3 (SP3) of Homo sapiens (Human).